The sequence spans 333 residues: MTDSAAGATEVATPATPSNKPYDATAKQKSLDKTARIPIKIVPAEKLKKPDWIRVRAATGNSRFYEIKDILRANNLVTVCEEASCPNIGECFGKGTATFMIMGDKCTRRCPFCDVGHGRPDPLDVNEPENLAKTIAELKLNYVVITSVDRDDLRDGGAQHYVDCISRTRALSPATRIEVLVPDFRGRLEKALDILQECPPDVMNHNLETVPRLYKQARPGADYAHSLKLLKDFKARNPNVPTKSGLMVGLGETDEEILEVMRDMREHDIDMLTIGQYLAPSGHHLPVLRYVHPDTFKMFEEKAYEMGFTHAAVGAMVRSSYHADQQAHEAGVV.

The tract at residues 1-29 is disordered; that stretch reads MTDSAAGATEVATPATPSNKPYDATAKQK. [4Fe-4S] cluster-binding residues include Cys-80, Cys-85, Cys-91, Cys-106, Cys-110, Cys-113, and Ser-320. A Radical SAM core domain is found at 91–309; sequence CFGKGTATFM…EEKAYEMGFT (219 aa).

It belongs to the radical SAM superfamily. Lipoyl synthase family. [4Fe-4S] cluster is required as a cofactor.

It is found in the cytoplasm. The catalysed reaction is [[Fe-S] cluster scaffold protein carrying a second [4Fe-4S](2+) cluster] + N(6)-octanoyl-L-lysyl-[protein] + 2 oxidized [2Fe-2S]-[ferredoxin] + 2 S-adenosyl-L-methionine + 4 H(+) = [[Fe-S] cluster scaffold protein] + N(6)-[(R)-dihydrolipoyl]-L-lysyl-[protein] + 4 Fe(3+) + 2 hydrogen sulfide + 2 5'-deoxyadenosine + 2 L-methionine + 2 reduced [2Fe-2S]-[ferredoxin]. It participates in protein modification; protein lipoylation via endogenous pathway; protein N(6)-(lipoyl)lysine from octanoyl-[acyl-carrier-protein]: step 2/2. Functionally, catalyzes the radical-mediated insertion of two sulfur atoms into the C-6 and C-8 positions of the octanoyl moiety bound to the lipoyl domains of lipoate-dependent enzymes, thereby converting the octanoylated domains into lipoylated derivatives. The polypeptide is Lipoyl synthase (Ralstonia pickettii (strain 12J)).